A 222-amino-acid polypeptide reads, in one-letter code: 2-C-methyl-D-erythritol 4-phosphate cytidylyltransferase (222 aa).

This sequence belongs to the IspD/TarI cytidylyltransferase family. IspD subfamily.

The catalysed reaction is 2-C-methyl-D-erythritol 4-phosphate + CTP + H(+) = 4-CDP-2-C-methyl-D-erythritol + diphosphate. Its pathway is isoprenoid biosynthesis; isopentenyl diphosphate biosynthesis via DXP pathway; isopentenyl diphosphate from 1-deoxy-D-xylulose 5-phosphate: step 2/6. Its function is as follows. Catalyzes the formation of 4-diphosphocytidyl-2-C-methyl-D-erythritol from CTP and 2-C-methyl-D-erythritol 4-phosphate (MEP). This Porphyromonas gingivalis (strain ATCC BAA-308 / W83) protein is 2-C-methyl-D-erythritol 4-phosphate cytidylyltransferase.